Here is a 184-residue protein sequence, read N- to C-terminus: PLASMODESMATA CALLOSE-BINDING PROTEIN 3 (184 aa).

Positions 1–19 (MAVFVLVMILLAMAGHSSG) are cleaved as a signal peptide. C22 and C84 are joined by a disulfide. Residues 109–146 (SGSGTTTPVTTTPSTRVPTTTNTRPYTITPSTGGGLGI) form a disordered region. The segment covering 113–139 (TTTPVTTTPSTRVPTTTNTRPYTITPS) has biased composition (low complexity). S158 carries the GPI-anchor amidated serine lipid modification. Positions 159-184 (FGFKLQSPRFGFIVLFTLFLPFYLFS) are cleaved as a propeptide — removed in mature form.

Post-translationally, contains two additional disulfide bonds. Expressed in the shoot apical region and in young leaves but also detected in the laminar and vasculature of mature leaves.

It localises to the cell membrane. The protein localises to the cell junction. It is found in the plasmodesma. This chain is PLASMODESMATA CALLOSE-BINDING PROTEIN 3 (PDCB3), found in Arabidopsis thaliana (Mouse-ear cress).